A 270-amino-acid chain; its full sequence is tRNA (guanine-N(1)-)-methyltransferase (270 aa).

S-adenosyl-L-methionine-binding positions include Gly113 and 133 to 138 (IGDYVL). The interval 251 to 270 (APTEGTGLIHHRDVEGPGEG) is disordered. Residues 260–270 (HHRDVEGPGEG) show a composition bias toward basic and acidic residues.

The protein belongs to the RNA methyltransferase TrmD family. In terms of assembly, homodimer.

It is found in the cytoplasm. It carries out the reaction guanosine(37) in tRNA + S-adenosyl-L-methionine = N(1)-methylguanosine(37) in tRNA + S-adenosyl-L-homocysteine + H(+). Its function is as follows. Specifically methylates guanosine-37 in various tRNAs. The sequence is that of tRNA (guanine-N(1)-)-methyltransferase from Frankia casuarinae (strain DSM 45818 / CECT 9043 / HFP020203 / CcI3).